A 638-amino-acid chain; its full sequence is Plasma kallikrein (638 aa).

The signal sequence occupies residues 1–19 (MILFNRVGYFVSLFATVSC). Apple domains lie at 21–104 (CMTQ…LKQC), 111–194 (CHRD…LKSC), 201–284 (CPMD…LLTC), and 292–375 (CHSK…LRLC). Disulfide bonds link Cys21-Cys104, Cys47-Cys77, Cys51-Cys57, Cys111-Cys194, Cys137-Cys166, Cys141-Cys147, Cys201-Cys284, Cys227-Cys256, Cys231-Cys237, Cys292-Cys375, Cys318-Cys347, Cys322-Cys328, Cys340-Cys345, Cys383-Cys503, Cys419-Cys435, Cys517-Cys584, Cys548-Cys563, and Cys574-Cys602. N-linked (GlcNAc...) asparagine glycosylation is present at Asn127. Asn215 carries N-linked (GlcNAc...) asparagine glycosylation. Residue Asn308 is glycosylated (N-linked (GlcNAc...) asparagine). In terms of domain architecture, Peptidase S1 spans 391–626 (IVGGTNASLG…YMDWILEKTQ (236 aa)). Asn396 is a glycosylation site (N-linked (GlcNAc...) asparagine). Active-site charge relay system residues include His434 and Asp483. Asn494 carries an N-linked (GlcNAc...) asparagine glycan. The active-site Charge relay system is the Ser578.

The protein belongs to the peptidase S1 family. Plasma kallikrein subfamily. Forms a heterodimer with SERPINA5. The zymogen is activated by factor XIIa, which cleaves the molecule into a light chain, which contains the active site, and a heavy chain, which associates with HMW kininogen. These chains are linked by one or more disulfide bonds.

It is found in the secreted. It carries out the reaction Cleaves selectively Arg-|-Xaa and Lys-|-Xaa bonds, including Lys-|-Arg and Arg-|-Ser bonds in (human) kininogen to release bradykinin.. Inhibited by SERPINA5. In terms of biological role, the enzyme cleaves Lys-Arg and Arg-Ser bonds. It activates, in a reciprocal reaction, factor XII after its binding to a negatively charged surface. It also releases bradykinin from HMW kininogen and may also play a role in the renin-angiotensin system by converting prorenin into renin. This is Plasma kallikrein (Klkb1) from Mus musculus (Mouse).